Here is a 242-residue protein sequence, read N- to C-terminus: UPF0246 protein SPH_1662 (242 aa).

It belongs to the UPF0246 family.

The chain is UPF0246 protein SPH_1662 from Streptococcus pneumoniae (strain Hungary19A-6).